Consider the following 483-residue polypeptide: Rhamnulokinase (483 aa).

Residue 11 to 15 participates in ATP binding; that stretch reads ASSGR. Substrate-binding positions include Gly79 and 234–236; that span reads HDT. The Proton acceptor role is filled by Asp235. Thr257 lines the ATP pocket. Asn294 contacts substrate. ATP is bound at residue Gln302. A disulfide bond links Cys352 and Cys369. Gly401 serves as a coordination point for ATP.

This sequence belongs to the rhamnulokinase family. It depends on Mg(2+) as a cofactor.

The catalysed reaction is L-rhamnulose + ATP = L-rhamnulose 1-phosphate + ADP + H(+). It functions in the pathway carbohydrate degradation; L-rhamnose degradation; glycerone phosphate from L-rhamnose: step 2/3. Functionally, involved in the catabolism of L-rhamnose (6-deoxy-L-mannose). Catalyzes the transfer of the gamma-phosphate group from ATP to the 1-hydroxyl group of L-rhamnulose to yield L-rhamnulose 1-phosphate. The polypeptide is Rhamnulokinase (Listeria innocua serovar 6a (strain ATCC BAA-680 / CLIP 11262)).